A 576-amino-acid chain; its full sequence is Sulfite reductase [NADPH] hemoprotein beta-component (576 aa).

The span at 1-12 (MDAKTQPDRSRD) shows a compositional bias: basic and acidic residues. The disordered stretch occupies residues 1-26 (MDAKTQPDRSRDVSQPLDKLGPDETL). Cys-441, Cys-447, Cys-486, and Cys-490 together coordinate [4Fe-4S] cluster. Cys-490 contributes to the siroheme binding site.

This sequence belongs to the nitrite and sulfite reductase 4Fe-4S domain family. Alpha(8)-beta(8). The alpha component is a flavoprotein, the beta component is a hemoprotein. The cofactor is siroheme. [4Fe-4S] cluster is required as a cofactor.

It catalyses the reaction hydrogen sulfide + 3 NADP(+) + 3 H2O = sulfite + 3 NADPH + 4 H(+). The protein operates within sulfur metabolism; hydrogen sulfide biosynthesis; hydrogen sulfide from sulfite (NADPH route): step 1/1. Component of the sulfite reductase complex that catalyzes the 6-electron reduction of sulfite to sulfide. This is one of several activities required for the biosynthesis of L-cysteine from sulfate. This chain is Sulfite reductase [NADPH] hemoprotein beta-component, found in Nitrobacter winogradskyi (strain ATCC 25391 / DSM 10237 / CIP 104748 / NCIMB 11846 / Nb-255).